Reading from the N-terminus, the 74-residue chain is Small ribosomal subunit protein bS18 (74 aa).

Belongs to the bacterial ribosomal protein bS18 family. Part of the 30S ribosomal subunit. Forms a tight heterodimer with protein bS6.

In terms of biological role, binds as a heterodimer with protein bS6 to the central domain of the 16S rRNA, where it helps stabilize the platform of the 30S subunit. The chain is Small ribosomal subunit protein bS18 from Novosphingobium aromaticivorans (strain ATCC 700278 / DSM 12444 / CCUG 56034 / CIP 105152 / NBRC 16084 / F199).